Here is a 303-residue protein sequence, read N- to C-terminus: tRNA pseudouridine synthase B (303 aa).

The active-site Nucleophile is D47.

This sequence belongs to the pseudouridine synthase TruB family. Type 1 subfamily.

The catalysed reaction is uridine(55) in tRNA = pseudouridine(55) in tRNA. Responsible for synthesis of pseudouridine from uracil-55 in the psi GC loop of transfer RNAs. This is tRNA pseudouridine synthase B from Legionella pneumophila subsp. pneumophila (strain Philadelphia 1 / ATCC 33152 / DSM 7513).